Reading from the N-terminus, the 466-residue chain is MGPTSRNHKSSQKDVAPNEAKPPRYPQRNRSITASASASAFASPAVANSRVAKERPSSSTAGEGEPQETVLKLPSIPTLPARMAKLVPLEGLGCEAAVGSLTPSREREYKVTNKHTEGRRPVYAIVFNFLDVRYYDIFATACGPRLSTYRCLMNGKFALLQSYLDDDMNESFFTVSWACDIDGNPLLVAAGSTGIIRVINCATEKIYKSLVGHGGSVNEIKSQPSNPSLIISASKDESIKLWNVQTGILILVFGGVGGHRHEVLGVDFHTSDIYRFLSCGMDNTVRIWSMKEFWEYVEKSYSWTDATSKFPTKFVQFPVLCAEIHSNYVDCTKWLGDFVLSKSVENEILLWESITKEENPGEGHIDVLQKYPVPECNIWFMKFSCDFHHNQLAIGNRDGKVYVWKVQTSPPVLIARLNNPQVKSAIRQTAVSFDGSTILACTEDGNIWRWDEVDHPTAPVPSKKQK.

The segment covering 1-10 (MGPTSRNHKS) has biased composition (basic residues). The segment at 1–71 (MGPTSRNHKS…GEGEPQETVL (71 aa)) is disordered. The segment covering 31 to 49 (SITASASASAFASPAVANS) has biased composition (low complexity). WD repeat units lie at residues 167–209 (DMNE…IYKS), 212–252 (GHGG…LILV), 258–298 (GHRH…EYVE), 324–361 (IHSNYVDCTKWLGDFVLSKSVENEILLWESITKEENPG), 374–414 (PECN…PVLI), and 421–460 (QVKSAIRQTAVSFDGSTILACTEDGNIWRWDEVDHPTAPV).

Belongs to the WD repeat ESC family. As to quaternary structure, interacts with EZ1 and CLF. Component of the polycomb repressive complex 2 (PRC2), which methylates 'Lys-27' residues of histone H3 (H3K27me3), leading to transcriptional repression of the affected target gene. As to expression, expressed specifically in seed endosperm.

Its function is as follows. Polycomb group (PcG) protein. PcG proteins act by forming multiprotein complexes, which are required to maintain the transcriptionally repressive state of homeotic genes throughout development. PcG proteins are not required to initiate repression, but to maintain it during later stages of development. They act via the methylation of histones, rendering chromatin heritably changed in its expressibility. Together with EZ1 and CLF forms a complex that is involved in gene transcriptional repression by trimethylation on histone H3 'Lys-27' (H3K27me3) of target genes. Involved in the regulation of embryo and seed endosperm development. FIE1-containing PcG complex in seed endosperm regulates the expression of various transcription factors by trimethylation on histone H3 'Lys-27' (H3K27me3) of target genes. Involved in the overall expression regulation of nutrient metabolism genes, such as prolamin synthesis and seed storage protein synthesis genes. Can regulate valine, leucine and isoleucine metabolism-related genes. The protein is Polycomb group protein FIE1 of Oryza sativa subsp. japonica (Rice).